A 180-amino-acid polypeptide reads, in one-letter code: Threonylcarbamoyl-AMP synthase (180 aa).

The region spanning methionine 1–proline 180 is the YrdC-like domain.

The protein belongs to the SUA5 family. TsaC subfamily.

The protein localises to the cytoplasm. It carries out the reaction L-threonine + hydrogencarbonate + ATP = L-threonylcarbamoyladenylate + diphosphate + H2O. In terms of biological role, required for the formation of a threonylcarbamoyl group on adenosine at position 37 (t(6)A37) in tRNAs that read codons beginning with adenine. Catalyzes the conversion of L-threonine, HCO(3)(-)/CO(2) and ATP to give threonylcarbamoyl-AMP (TC-AMP) as the acyladenylate intermediate, with the release of diphosphate. The chain is Threonylcarbamoyl-AMP synthase from Methylobacillus flagellatus (strain ATCC 51484 / DSM 6875 / VKM B-1610 / KT).